The primary structure comprises 196 residues: CASP-like protein 2A2 (196 aa).

Residues 1–26 (MAQGKESVSVVEMEGSGNGPAVEMRH) are Cytoplasmic-facing. The chain crosses the membrane as a helical span at residues 27–47 (FETLFRLLPVGLCISALVLML). The Extracellular portion of the chain corresponds to 48 to 68 (KSEQSDQYMQLDYSNVDAFRC). A helical transmembrane segment spans residues 69–89 (LAYANGICAGYSLISAFDSMV). The Cytoplasmic segment spans residues 90-98 (PVSHHISRS). Residues 99–119 (WILFLLDQGITYLMLAGGAVA) traverse the membrane as a helical segment. Over 120–148 (TQVLYVAYKGDEKATWEQICGSYGRFCNR) the chain is Extracellular. A helical membrane pass occupies residues 149 to 169 (AGASVIISFFALVCFLLLSLL). Residues 170–196 (SAYRLFSKYDPPIHGGAKLEDQTTAQI) lie on the Cytoplasmic side of the membrane.

Belongs to the Casparian strip membrane proteins (CASP) family. Homodimer and heterodimers.

The protein resides in the cell membrane. This chain is CASP-like protein 2A2, found in Picea sitchensis (Sitka spruce).